A 389-amino-acid polypeptide reads, in one-letter code: Leucine aminopeptidase 1 (389 aa).

The first 18 residues, Met-1–Ala-18, serve as a signal peptide directing secretion. Residues Ala-19–Ser-89 constitute a propeptide that is removed on maturation. Asn-99 carries an N-linked (GlcNAc...) asparagine glycan. Zn(2+) is bound by residues His-188, Asp-207, Glu-246, and Asp-273. Cys-322 and Cys-326 are oxidised to a cystine. A Zn(2+)-binding site is contributed by His-355.

Belongs to the peptidase M28 family. M28E subfamily. In terms of assembly, monomer. The cofactor is Zn(2+).

It localises to the secreted. Its function is as follows. Extracellular aminopeptidase that allows assimilation of proteinaceous substrates. The sequence is that of Leucine aminopeptidase 1 (lap1) from Pyrenophora teres f. teres (strain 0-1) (Barley net blotch fungus).